The chain runs to 501 residues: Cytochrome P450 4d2 (501 aa).

Heme is bound by residues E311 and C449.

The protein belongs to the cytochrome P450 family. It depends on heme as a cofactor.

The protein localises to the endoplasmic reticulum membrane. It localises to the microsome membrane. Its function is as follows. Involved in the metabolism of insect hormones and in the breakdown of synthetic insecticides. The sequence is that of Cytochrome P450 4d2 (Cyp4d2) from Drosophila melanogaster (Fruit fly).